The chain runs to 398 residues: Argininosuccinate synthase (398 aa).

Position 8–16 (8–16) interacts with ATP; sequence AYSGGLDTS. Tyrosine 87 serves as a coordination point for L-citrulline. Residue glycine 117 coordinates ATP. Residues threonine 119, asparagine 123, and aspartate 124 each contribute to the L-aspartate site. Position 123 (asparagine 123) interacts with L-citrulline. Residues arginine 127, serine 175, glutamate 260, and tyrosine 272 each coordinate L-citrulline.

Belongs to the argininosuccinate synthase family. Type 1 subfamily. As to quaternary structure, homotetramer.

It is found in the cytoplasm. The catalysed reaction is L-citrulline + L-aspartate + ATP = 2-(N(omega)-L-arginino)succinate + AMP + diphosphate + H(+). It participates in amino-acid biosynthesis; L-arginine biosynthesis; L-arginine from L-ornithine and carbamoyl phosphate: step 2/3. In Mycobacterium tuberculosis (strain ATCC 25618 / H37Rv), this protein is Argininosuccinate synthase.